Consider the following 487-residue polypeptide: Protein nucleotidyltransferase YdiU (487 aa).

ATP-binding residues include Gly85, Gly87, Arg88, Lys108, Asp120, Gly121, Arg171, and Arg178. The active-site Proton acceptor is Asp247. Residues Asn248 and Asp257 each contribute to the Mg(2+) site. An ATP-binding site is contributed by Asp257.

The protein belongs to the SELO family. Mg(2+) is required as a cofactor. Requires Mn(2+) as cofactor.

It carries out the reaction L-seryl-[protein] + ATP = 3-O-(5'-adenylyl)-L-seryl-[protein] + diphosphate. The enzyme catalyses L-threonyl-[protein] + ATP = 3-O-(5'-adenylyl)-L-threonyl-[protein] + diphosphate. It catalyses the reaction L-tyrosyl-[protein] + ATP = O-(5'-adenylyl)-L-tyrosyl-[protein] + diphosphate. The catalysed reaction is L-histidyl-[protein] + UTP = N(tele)-(5'-uridylyl)-L-histidyl-[protein] + diphosphate. It carries out the reaction L-seryl-[protein] + UTP = O-(5'-uridylyl)-L-seryl-[protein] + diphosphate. The enzyme catalyses L-tyrosyl-[protein] + UTP = O-(5'-uridylyl)-L-tyrosyl-[protein] + diphosphate. Its function is as follows. Nucleotidyltransferase involved in the post-translational modification of proteins. It can catalyze the addition of adenosine monophosphate (AMP) or uridine monophosphate (UMP) to a protein, resulting in modifications known as AMPylation and UMPylation. This chain is Protein nucleotidyltransferase YdiU, found in Agrobacterium fabrum (strain C58 / ATCC 33970) (Agrobacterium tumefaciens (strain C58)).